The following is a 326-amino-acid chain: Putative ABC transporter ATP-binding protein MPN_334 (326 aa).

Residues 7-239 (VEVKHLEKEF…NFGYRLKVNN (233 aa)) enclose the ABC transporter domain. 42–49 (GQNGAGKT) serves as a coordination point for ATP.

It belongs to the ABC transporter superfamily.

This chain is Putative ABC transporter ATP-binding protein MPN_334, found in Mycoplasma pneumoniae (strain ATCC 29342 / M129 / Subtype 1) (Mycoplasmoides pneumoniae).